A 1310-amino-acid chain; its full sequence is Multidrug resistance protein 4 (1310 aa).

5 helical membrane-spanning segments follow: residues tryptophan 48–threonine 68, methionine 125–valine 145, lysine 196–alanine 216, leucine 223–alanine 243, and glycine 299–leucine 319. The 314-residue stretch at alanine 55–threonine 368 folds into the ABC transmembrane type-1 1 domain. Asparagine 336 is a glycosylation site (N-linked (GlcNAc...) asparagine). The helical transmembrane segment at valine 342 to proline 362 threads the bilayer. A glycan (N-linked (GlcNAc...) asparagine) is linked at asparagine 402. The 240-residue stretch at isoleucine 403–arginine 642 folds into the ABC transporter 1 domain. Glycine 438–serine 445 contacts ATP. N-linked (GlcNAc...) asparagine glycosylation occurs at asparagine 608. The next 2 membrane-spanning stretches (helical) occupy residues tryptophan 721–phenylalanine 741 and isoleucine 773–phenylalanine 793. In terms of domain architecture, ABC transmembrane type-1 2 spans phenylalanine 722–lysine 1030. Residue asparagine 816 is glycosylated (N-linked (GlcNAc...) asparagine). Helical transmembrane passes span valine 849–tyrosine 869, tryptophan 871–asparagine 891, and isoleucine 945–threonine 965. Positions isoleucine 1065–glutamine 1304 constitute an ABC transporter 2 domain. Glycine 1100–serine 1107 contributes to the ATP binding site.

The protein belongs to the ABC transporter superfamily. ABCB family. Multidrug resistance exporter (TC 3.A.1.201) subfamily.

The protein resides in the membrane. It catalyses the reaction ATP + H2O + xenobioticSide 1 = ADP + phosphate + xenobioticSide 2.. Functionally, energy-dependent efflux pump responsible for decreased drug accumulation in multidrug resistance parasites. In Entamoeba histolytica (strain ATCC 30459 / HM-1:IMSS / ABRM), this protein is Multidrug resistance protein 4.